We begin with the raw amino-acid sequence, 245 residues long: Pyridoxine 5'-phosphate synthase (245 aa).

Asn7 provides a ligand contact to 3-amino-2-oxopropyl phosphate. 9–10 (DH) contacts 1-deoxy-D-xylulose 5-phosphate. Arg18 contacts 3-amino-2-oxopropyl phosphate. His43 (proton acceptor) is an active-site residue. Residues Arg45 and His50 each contribute to the 1-deoxy-D-xylulose 5-phosphate site. Catalysis depends on Glu70, which acts as the Proton acceptor. Thr100 contributes to the 1-deoxy-D-xylulose 5-phosphate binding site. His190 acts as the Proton donor in catalysis. Residues Gly191 and 212–213 (GH) each bind 3-amino-2-oxopropyl phosphate.

It belongs to the PNP synthase family. Homooctamer; tetramer of dimers.

It localises to the cytoplasm. The enzyme catalyses 3-amino-2-oxopropyl phosphate + 1-deoxy-D-xylulose 5-phosphate = pyridoxine 5'-phosphate + phosphate + 2 H2O + H(+). It participates in cofactor biosynthesis; pyridoxine 5'-phosphate biosynthesis; pyridoxine 5'-phosphate from D-erythrose 4-phosphate: step 5/5. In terms of biological role, catalyzes the complicated ring closure reaction between the two acyclic compounds 1-deoxy-D-xylulose-5-phosphate (DXP) and 3-amino-2-oxopropyl phosphate (1-amino-acetone-3-phosphate or AAP) to form pyridoxine 5'-phosphate (PNP) and inorganic phosphate. In Prochlorococcus marinus (strain MIT 9313), this protein is Pyridoxine 5'-phosphate synthase.